A 447-amino-acid chain; its full sequence is Probable glycine dehydrogenase (decarboxylating) subunit 1 (447 aa).

It belongs to the GcvP family. N-terminal subunit subfamily. As to quaternary structure, the glycine cleavage system is composed of four proteins: P, T, L and H. In this organism, the P 'protein' is a heterodimer of two subunits.

It catalyses the reaction N(6)-[(R)-lipoyl]-L-lysyl-[glycine-cleavage complex H protein] + glycine + H(+) = N(6)-[(R)-S(8)-aminomethyldihydrolipoyl]-L-lysyl-[glycine-cleavage complex H protein] + CO2. In terms of biological role, the glycine cleavage system catalyzes the degradation of glycine. The P protein binds the alpha-amino group of glycine through its pyridoxal phosphate cofactor; CO(2) is released and the remaining methylamine moiety is then transferred to the lipoamide cofactor of the H protein. The polypeptide is Probable glycine dehydrogenase (decarboxylating) subunit 1 (Azorhizobium caulinodans (strain ATCC 43989 / DSM 5975 / JCM 20966 / LMG 6465 / NBRC 14845 / NCIMB 13405 / ORS 571)).